A 424-amino-acid polypeptide reads, in one-letter code: Interferon regulatory factor 8 (424 aa).

Residues 7 to 114 (GRRLRQWLIE…EPYKVYRIVP (108 aa)) constitute a DNA-binding region (IRF tryptophan pentad repeat).

It belongs to the IRF family. In terms of assembly, interacts with COPS2. Interacts (via C-terminus) with TRIM21 (via C-terminus). Interacts with the BATF-JUNB heterodimer. Interacts with BATF (via bZIP domain); the interaction is direct. Interacts with SPI1. In terms of processing, ubiquitinated. Ubiquitination by TRIM21 in macrophages, a process that is strongly increased upon interferon gamma stimulation, leds to the enhanced transcriptional activity of target cytokine genes. Ubiquitination leads to its degradation by the proteasome. Post-translationally, sumoylated with SUMO3. Desumoylated by SENP1. Expressed in bone marrow macrophages (at protein level). Mainly expressed in lymphoid tissues. Predominantly expressed in CD8(+)-expressing dendritic cells.

It is found in the nucleus. The protein resides in the cytoplasm. In terms of biological role, transcription factor that specifically binds to the upstream regulatory region of type I interferon (IFN) and IFN-inducible MHC class I genes (the interferon consensus sequence (ICS)). Can both act as a transcriptional activator or repressor. Plays a negative regulatory role in cells of the immune system. Involved in CD8(+) dendritic cell differentiation by forming a complex with the BATF-JUNB heterodimer in immune cells, leading to recognition of AICE sequence (5'-TGAnTCA/GAAA-3'), an immune-specific regulatory element, followed by cooperative binding of BATF and IRF8 and activation of genes. Required for the development of plasmacytoid dendritic cells (pDCs), which produce most of the type I IFN in response to viral infection. Positively regulates macroautophagy in dendritic cells. Acts as a transcriptional repressor of osteoclast differentiation factors such as NFATC1 and EEIG1. This is Interferon regulatory factor 8 from Mus musculus (Mouse).